The chain runs to 752 residues: MARQVKRKSGADRNDGGGKYNSNNDRSVKRGRSELRTVTRTSRRDRGQDEQHNSHGTGGDFDIEGNVKDGRENVEQDKEEEEEEEDEDKGKAYEALLTLLKIEQKQEMKSGNKMENGRGLENTGSETGEKDNSAVKDDEDEDEDDFGEDENAGVVLEDQKEEEEEEKEDEDEDEEEEEDDEDTPAGINNDAFELHFNQPTEEYLEQEDKLVLKENAKWNIHKKESYDDLSLTSITQSPPGSSITIPSSLLKQKGTDISEYPLKKRVYTAFESTYGPSISKLESILLQPILNYQDINYQYKTFLNSSYRKLYALHALNHIYKTRDRILKNTAKLHQLNEDGDDLELRDQGFTRPKVLILLPTRDACNEIVEMIIKLSGTDQQENKKKFTTQFYTKAETRTNKPGDFQDAFKGNNNDFFCIGMKLTRKTLKLYSSFYSSDIILASPLGLSMILENPDKKKRQYDFISSIEVLIVDRANQIEMQNWDHVNTVMKYINKVPKEFHDADFSRIRMWSINDQAKLLRQTLVFSEYQTPAINNLVSSKSHNLAGKIRFKPVITSENSIMNSIGLRIKQVFQRFPSESPLADPDSRFKFFTNSIIPHLLQSSSYGNGIMIYIPSYFDYLRVKQHFKDSTKYNFGAIDEYSSQSKLTRTRHEFALGKIQIILYTERLHYFRRYEISGVKNLIMYVPPSNPLFYKELIRFIGKSVFKEECDLDLTWAKLIYSKWDANALERIVGNERAPVLCSSQNEQYEFR.

Residues methionine 1–asparagine 189 form a disordered region. 2 stretches are compositionally biased toward basic and acidic residues: residues arginine 26–asparagine 53 and glycine 65–glutamine 76. The span at aspartate 77–glutamate 87 shows a compositional bias: acidic residues. 2 stretches are compositionally biased toward basic and acidic residues: residues isoleucine 102–arginine 118 and threonine 127–lysine 136. 2 stretches are compositionally biased toward acidic residues: residues aspartate 137–asparagine 151 and glutamine 159–threonine 183.

This sequence belongs to the UTP25 family. In terms of assembly, component of the ribosomal small subunit (SSU) processome composed of at least 40 protein subunits and snoRNA U3.

Its subcellular location is the nucleus. It is found in the nucleolus. DEAD-box RNA helicase-like protein required for pre-18S rRNA processing, specifically at sites A0, A1, and A2. The sequence is that of U3 small nucleolar RNA-associated protein 25 (UTP25) from Lodderomyces elongisporus (strain ATCC 11503 / CBS 2605 / JCM 1781 / NBRC 1676 / NRRL YB-4239) (Yeast).